The following is a 69-amino-acid chain: MSAPYKNLDRDTKHTHPKLNETERNLNRGWGDVKKEELYEDLAQSDADKQLAEDKMETKYEKSKPAPSD.

2 disordered regions span residues 1 to 32 (MSAP…GWGD) and 44 to 69 (QSDA…APSD). 2 stretches are compositionally biased toward basic and acidic residues: residues 7–32 (NLDR…GWGD) and 46–69 (DADK…APSD).

This is an uncharacterized protein from Schizosaccharomyces pombe (strain 972 / ATCC 24843) (Fission yeast).